Here is a 502-residue protein sequence, read N- to C-terminus: Protein O-glucosyltransferase 2 (502 aa).

The first 19 residues, 1–19, serve as a signal peptide directing secretion; the sequence is MFGTLLLYCFFLATVPALA. Residues 24–130 form a Filamin repeat; sequence ERQLSPEKSE…VAKSPYILKG (107 aa). Asn302 and Asn414 each carry an N-linked (GlcNAc...) asparagine glycan. Residues 499–502 carry the Prevents secretion from ER motif; the sequence is KDEL.

The protein belongs to the KDELC family. Post-translationally, N-glycosylated.

It localises to the endoplasmic reticulum lumen. It carries out the reaction L-seryl-[EGF-like domain protein] + UDP-alpha-D-glucose = 3-O-(beta-D-glucosyl)-L-seryl-[EGF-like domain protein] + UDP + H(+). The catalysed reaction is L-seryl-[EGF-like domain protein] + UDP-alpha-D-xylose = 3-O-(beta-D-xylosyl)-L-seryl-[EGF-like domain protein] + UDP + H(+). It functions in the pathway protein modification; protein glycosylation. Functionally, protein glucosyltransferase that catalyzes the transfer of glucose from UDP-glucose to a serine residue within the consensus sequence peptide C-X-N-T-X-G-S-F-X-C. Can also catalyze the transfer of xylose from UDP-xylose but less efficiently. Specifically targets extracellular EGF repeats of proteins such as NOTCH1, NOTCH3, FBN1, FBN2 and LTBP1. May regulate the transport of NOTCH1 and NOTCH3 to the plasma membrane and thereby the Notch signaling pathway. The protein is Protein O-glucosyltransferase 2 of Homo sapiens (Human).